The following is a 412-amino-acid chain: MGLKHLIEKLEPHFTHGGKLEKYYPLYEAAATIFYTPGQVTRGAAHVRDAIDLKRMMILVWFAVFPAMFWGMYNVGLQTIPALHKLYGTEQLQQVIANNWHYSVAQWLGVSFSADAGWLSMMTLGAVFFLPIYITVFIVGGFWEVLFAIVRKHEINEGFFVTSILFALIVPPTLPLWQAALGISFGVVIAKEIFGGTGRNFLNPALAGRAFLFFAYPAQISGDLVWTAADGFSGATPLSQWASGGGEALVNVATGIPVSWMDAFLGNIPGSIGEVSTLMILIGGAIILFGRVASWRIVAGVMIGMIATATLFNVIGSDTNPMFSMPWYWHLVLGGFAFGMMFMATDPVSASFTDKGKWSYGVLIGVMCVLIRVVNPAYPEGMMLAILFANLFAPLFDYLVVQANIKRRKSRG.

A run of 3 helical transmembrane segments spans residues 57 to 77 (MILVWFAVFPAMFWGMYNVGL), 127 to 147 (VFFLPIYITVFIVGGFWEVLF), and 163 to 183 (SILFALIVPPTLPLWQAALGI). Thr236 is subject to FMN phosphoryl threonine. 5 helical membrane-spanning segments follow: residues 270–290 (GSIGEVSTLMILIGGAIILFG), 297–317 (IVAGVMIGMIATATLFNVIGS), 322–342 (MFSMPWYWHLVLGGFAFGMMF), 358–378 (WSYGVLIGVMCVLIRVVNPAY), and 381–401 (GMMLAILFANLFAPLFDYLVV).

It belongs to the NqrB/RnfD family. In terms of assembly, composed of six subunits; NqrA, NqrB, NqrC, NqrD, NqrE and NqrF. Requires FMN as cofactor.

Its subcellular location is the cell inner membrane. The catalysed reaction is a ubiquinone + n Na(+)(in) + NADH + H(+) = a ubiquinol + n Na(+)(out) + NAD(+). Its function is as follows. NQR complex catalyzes the reduction of ubiquinone-1 to ubiquinol by two successive reactions, coupled with the transport of Na(+) ions from the cytoplasm to the periplasm. NqrA to NqrE are probably involved in the second step, the conversion of ubisemiquinone to ubiquinol. This chain is Na(+)-translocating NADH-quinone reductase subunit B, found in Klebsiella pneumoniae (strain 342).